Consider the following 164-residue polypeptide: C-phycoerythrin alpha chain (164 aa).

Residues cysteine 82 and cysteine 139 each coordinate (2R,3E)-phycoerythrobilin.

It belongs to the phycobiliprotein family. As to quaternary structure, heterodimer of an alpha and a beta chain. In terms of processing, contains two covalently linked bilin chromophores.

It is found in the cellular thylakoid membrane. Its function is as follows. Light-harvesting photosynthetic bile pigment-protein from the phycobiliprotein complex. This Synechocystis sp. (strain PCC 6701) protein is C-phycoerythrin alpha chain (cpeA).